The following is a 439-amino-acid chain: Casein kinase I homolog 3 (439 aa).

Positions 15-286 (YRVGKKIGEG…LRSLFDSLLL (272 aa)) constitute a Protein kinase domain. ATP is bound by residues 21-29 (IGEGSFGML) and Lys-44. Catalysis depends on Asp-134, which acts as the Proton acceptor. Residues 366 to 426 (DGIPGKAASP…PSKEKSRKKF (61 aa)) form a disordered region. A compositionally biased stretch (low complexity) spans 372–413 (AASPQVQQQQQTSSAQQQQPQRVEQPAPQTTQPTQVDTQQAA).

This sequence belongs to the protein kinase superfamily. CK1 Ser/Thr protein kinase family. Casein kinase I subfamily.

Its subcellular location is the cytoplasm. It catalyses the reaction L-seryl-[protein] + ATP = O-phospho-L-seryl-[protein] + ADP + H(+). The enzyme catalyses L-threonyl-[protein] + ATP = O-phospho-L-threonyl-[protein] + ADP + H(+). Casein kinases are operationally defined by their preferential utilization of acidic proteins such as caseins as substrates. The chain is Casein kinase I homolog 3 (cki3) from Schizosaccharomyces pombe (strain 972 / ATCC 24843) (Fission yeast).